We begin with the raw amino-acid sequence, 271 residues long: Phosphate import ATP-binding protein PstB (271 aa).

The ABC transporter domain maps to 13-266 (VRTAPVSEAE…PKHPYTEAYI (254 aa)). 57-64 (GPSGCGKS) contributes to the ATP binding site.

It belongs to the ABC transporter superfamily. Phosphate importer (TC 3.A.1.7) family. In terms of assembly, the complex is composed of two ATP-binding proteins (PstB), two transmembrane proteins (PstC and PstA) and a solute-binding protein (PstS).

It localises to the cell inner membrane. It carries out the reaction phosphate(out) + ATP + H2O = ADP + 2 phosphate(in) + H(+). Part of the ABC transporter complex PstSACB involved in phosphate import. Responsible for energy coupling to the transport system. The chain is Phosphate import ATP-binding protein PstB from Thermus thermophilus (strain ATCC 27634 / DSM 579 / HB8).